The following is a 356-amino-acid chain: Heparan sulfate 2-O-sulfotransferase 1 (356 aa).

Topologically, residues 1 to 11 (MGLLRIMMPPK) are cytoplasmic. A helical; Signal-anchor for type II membrane protein transmembrane segment spans residues 12–28 (LQLLAVVAFAVAMLFLE). Residues 24-51 (MLFLENQIQKLEESRAKLERAIARHEVR) adopt a coiled-coil conformation. Topologically, residues 29-356 (NQIQKLEESR…FYEKIYPKSN (328 aa)) are lumenal. Adenosine 3',5'-bisphosphate-binding residues include K83, T84, A85, S86, T87, and S88. N-linked (GlcNAc...) asparagine glycosylation is found at N108 and N127. Active-site residues include H140 and H142. Adenosine 3',5'-bisphosphate contacts are provided by R164 and S172. 2 disulfides stabilise this stretch: C201-C209 and C222-C228. Residues Y279, S285, T290, and K293 each contribute to the adenosine 3',5'-bisphosphate site.

Belongs to the sulfotransferase 3 family. In terms of assembly, homotrimer. Interacts with the C5-epimerase GLCE. In terms of processing, N-glycosylated. Widely expressed. Expressed at higher level in lung and brain. Weakly expressed in spleen.

The protein localises to the golgi apparatus membrane. Its function is as follows. Catalyzes the transfer of a sulfo group from 3'-phospho-5'-adenylyl sulfate (PAPS) to the 2-OH position of iduronic acid (IdoA) or glucuronic acid (GlcA) within the heparan sulfate (HS) chain and participates in HS biosynthesis. Required for metanephric development of kidney formation, suggesting that 2-O-sulfation within HS is essential for signaling between ureteric bud and metanephric mesenchyme. This Mus musculus (Mouse) protein is Heparan sulfate 2-O-sulfotransferase 1.